Reading from the N-terminus, the 551-residue chain is Methyl-accepting chemotaxis protein I (551 aa).

Over 1-6 the chain is Cytoplasmic; that stretch reads MLKRIK. A helical membrane pass occupies residues 7–30; the sequence is IVTSLLLVLAVFGLLQLTSGGLFF. At 31-190 the chain is on the periplasmic side; it reads NALKNDKENF…AVSDNNASYS (160 aa). Positions 64 to 73 are the 3 Arg may form a positively charged pocket, which binds the alpha-carboxyl group of the attractant AA; sequence RNTLNRAGIR. Residues 191 to 210 form a helical membrane-spanning segment; the sequence is QAMWILVGVMIVVLAVIFAV. The Cytoplasmic portion of the chain corresponds to 211 to 551; that stretch reads WFGIKASLVA…ADSEENWETF (341 aa). Residues 216 to 268 form the HAMP domain; that stretch reads ASLVAPMNRLIDSIRHIAGGDLVKPIEVDGSNEMGQLAESLRHMQGELMRTVG. Residues 273–502 form the Methyl-accepting transducer domain; it reads GANAIYSGAS…ESAAAAAALE (230 aa). A Glutamate methyl ester (Gln) modification is found at glutamine 297. At glutamate 304 the chain carries Glutamate methyl ester (Glu). Residue glutamine 311 is modified to Glutamate methyl ester (Gln). Glutamate 493 and glutamate 502 each carry glutamate methyl ester (Glu).

The protein belongs to the methyl-accepting chemotaxis (MCP) protein family.

It localises to the cell inner membrane. In terms of biological role, receptor for the attractant L-serine and related amino acids. Is also responsible for chemotaxis away from a wide range of repellents, including leucine, indole, and weak acids. Chemotactic-signal transducers respond to changes in the concentration of attractants and repellents in the environment, transduce a signal from the outside to the inside of the cell, and facilitate sensory adaptation through the variation of the level of methylation. Attractants increase the level of methylation while repellents decrease the level of methylation, the methyl groups are added by the methyltransferase CheR and removed by the methylesterase CheB. In Escherichia coli (strain K12), this protein is Methyl-accepting chemotaxis protein I (tsr).